The sequence spans 136 residues: Small ribosomal subunit protein uS9 (136 aa).

Belongs to the universal ribosomal protein uS9 family.

The protein is Small ribosomal subunit protein uS9 of Synechococcus sp. (strain JA-2-3B'a(2-13)) (Cyanobacteria bacterium Yellowstone B-Prime).